The primary structure comprises 124 residues: Small ribosomal subunit protein uS10 (124 aa).

The protein belongs to the universal ribosomal protein uS10 family.

The polypeptide is Small ribosomal subunit protein uS10 (rps20) (Dictyostelium discoideum (Social amoeba)).